Here is a 111-residue protein sequence, read N- to C-terminus: Flagellar hook-basal body complex protein FliE (111 aa).

Belongs to the FliE family.

The protein resides in the bacterial flagellum basal body. This Clostridium acetobutylicum (strain ATCC 824 / DSM 792 / JCM 1419 / IAM 19013 / LMG 5710 / NBRC 13948 / NRRL B-527 / VKM B-1787 / 2291 / W) protein is Flagellar hook-basal body complex protein FliE.